Reading from the N-terminus, the 79-residue chain is Acyl carrier protein (79 aa).

One can recognise a Carrier domain in the interval 2–77; sequence SEIGERVKKI…DATKFLEKNA (76 aa). S37 bears the O-(pantetheine 4'-phosphoryl)serine mark.

This sequence belongs to the acyl carrier protein (ACP) family. Post-translationally, 4'-phosphopantetheine is transferred from CoA to a specific serine of apo-ACP by AcpS. This modification is essential for activity because fatty acids are bound in thioester linkage to the sulfhydryl of the prosthetic group.

The protein localises to the cytoplasm. It functions in the pathway lipid metabolism; fatty acid biosynthesis. Functionally, carrier of the growing fatty acid chain in fatty acid biosynthesis. This is Acyl carrier protein from Nitrobacter winogradskyi (strain ATCC 25391 / DSM 10237 / CIP 104748 / NCIMB 11846 / Nb-255).